Reading from the N-terminus, the 239-residue chain is Ribosomal RNA small subunit methyltransferase G (239 aa).

Residues G76, F81, 99 to 101 (DSS), 128 to 129 (IE), and R147 contribute to the S-adenosyl-L-methionine site.

This sequence belongs to the methyltransferase superfamily. RNA methyltransferase RsmG family.

The protein resides in the cytoplasm. Its function is as follows. Specifically methylates the N7 position of a guanine in 16S rRNA. This is Ribosomal RNA small subunit methyltransferase G from Prochlorococcus marinus (strain MIT 9515).